A 361-amino-acid chain; its full sequence is DLYKIAEICRDKGVKSYLTVNTVIYDEDMTLMRSVIDAAQKAQISAIIASDVAAMTYANEIGVEVHLSTQLNISNAEALRFIALAMWSYWQRAEYGSGTYNPRDHRQGHICGPKGHPVRIEMFAHGALCMAVSGKCYLSLHEHNTSANRGACAQICRRGYTVKDSGLELDIENQYIMSPKDLKTIHFINKMMDAGVRVFKIEGRARGPEYVYTVCRCYKEAIEAYCNGTYDEESIGRWDEQLATVFNRGFWDGYYLGQRLGEWTHRYGSGRTRQKTYVGKGIKYFSRLGVAEFEIESGELHIGDEIVITGPTTGVIIQKVEEIRYELQTVEKATKGQRISIPVKEKVRPSDKLYRFDKREE.

Belongs to the peptidase U32 family. As to quaternary structure, homodimer. A metal cation is required as a cofactor.

Its activity is regulated as follows. Activity somewhat enhanced by calcium ions, inhibited by zinc and Fe(3+) ions and by p-chloromercuribenzoic acid and EDTA. Activity is enhanced by salivary peptide cystatin and reduced by salivary peptide histatin. Functionally, has collagenase activity. Active on soluble collagen, reconstituted type I collagen, heat denatured type I collagen and azocoll, but not gelatin or the synthetic bacterial collagenase substrate PZ-PLGPA. May play a role in virulence. The protein is Collagenase of Porphyromonas gingivalis (Bacteroides gingivalis).